We begin with the raw amino-acid sequence, 754 residues long: 1,4-alpha-glucan branching enzyme GlgB (754 aa).

The Nucleophile role is filled by Asp-431. The active-site Proton donor is Glu-484.

The protein belongs to the glycosyl hydrolase 13 family. GlgB subfamily. Monomer.

The enzyme catalyses Transfers a segment of a (1-&gt;4)-alpha-D-glucan chain to a primary hydroxy group in a similar glucan chain.. It participates in glycan biosynthesis; glycogen biosynthesis. In terms of biological role, catalyzes the formation of the alpha-1,6-glucosidic linkages in glycogen by scission of a 1,4-alpha-linked oligosaccharide from growing alpha-1,4-glucan chains and the subsequent attachment of the oligosaccharide to the alpha-1,6 position. The sequence is that of 1,4-alpha-glucan branching enzyme GlgB from Prochlorococcus marinus subsp. pastoris (strain CCMP1986 / NIES-2087 / MED4).